The sequence spans 418 residues: Serpin A9 (418 aa).

The N-terminal stretch at 1-25 (MGSSSFYRVLLLVGFCAPIFCMLSS) is a signal peptide. 3 N-linked (GlcNAc...) asparagine glycosylation sites follow: Asn103, Asn213, and Asn224.

This sequence belongs to the serpin family.

The protein resides in the secreted. In Mus musculus (Mouse), this protein is Serpin A9 (Serpina9).